A 221-amino-acid polypeptide reads, in one-letter code: Extracellular superoxide dismutase [Cu-Zn] (221 aa).

Positions 1–19 (MKTRVVLILALSVCIEAAS) are cleaved as a signal peptide. Asparagine 56 carries an N-linked (GlcNAc...) asparagine glycan. Histidine 70, histidine 72, and histidine 87 together coordinate Cu cation. Cysteine 81 and cysteine 170 are oxidised to a cystine. Histidine 87, histidine 95, histidine 104, and aspartate 107 together coordinate Zn(2+). Histidine 144 contacts Cu cation.

This sequence belongs to the Cu-Zn superoxide dismutase family. Cu cation is required as a cofactor. Requires Zn(2+) as cofactor. As to expression, isoform 2 is preferentially expressed in eggs.

It is found in the secreted. The protein localises to the extracellular space. The protein resides in the membrane. The enzyme catalyses 2 superoxide + 2 H(+) = H2O2 + O2. Functionally, protects cells against oxidative stress by converting superoxide radicals to hydrogen peroxide. Oxidative stress is involved in various biological dysfunctions and senescence. This Caenorhabditis elegans protein is Extracellular superoxide dismutase [Cu-Zn] (sod-4).